A 170-amino-acid polypeptide reads, in one-letter code: Lipoprotein signal peptidase (170 aa).

3 helical membrane-spanning segments follow: residues 9-29, 72-92, and 96-118; these read FNIF…KYLV, IFFL…SLKE, and IARI…RLFR. Residues D124 and D146 contribute to the active site. A helical membrane pass occupies residues 143–163; sequence NFADSYVVIGMILFLVYDFFI.

Belongs to the peptidase A8 family.

Its subcellular location is the cell inner membrane. It carries out the reaction Release of signal peptides from bacterial membrane prolipoproteins. Hydrolyzes -Xaa-Yaa-Zaa-|-(S,diacylglyceryl)Cys-, in which Xaa is hydrophobic (preferably Leu), and Yaa (Ala or Ser) and Zaa (Gly or Ala) have small, neutral side chains.. Its pathway is protein modification; lipoprotein biosynthesis (signal peptide cleavage). Its function is as follows. This protein specifically catalyzes the removal of signal peptides from prolipoproteins. The polypeptide is Lipoprotein signal peptidase (Borreliella afzelii (strain PKo) (Borrelia afzelii)).